The sequence spans 119 residues: NADH-ubiquinone oxidoreductase chain 3 (119 aa).

A run of 3 helical transmembrane segments spans residues 8-28 (IFIY…VPFL), 63-83 (LVSI…PWAV), and 88-108 (IDLF…IGFL).

The protein belongs to the complex I subunit 3 family.

It localises to the mitochondrion membrane. The enzyme catalyses a ubiquinone + NADH + 5 H(+)(in) = a ubiquinol + NAD(+) + 4 H(+)(out). Functionally, core subunit of the mitochondrial membrane respiratory chain NADH dehydrogenase (Complex I) that is believed to belong to the minimal assembly required for catalysis. Complex I functions in the transfer of electrons from NADH to the respiratory chain. The immediate electron acceptor for the enzyme is believed to be ubiquinone. The polypeptide is NADH-ubiquinone oxidoreductase chain 3 (ND3) (Brassica napus (Rape)).